The primary structure comprises 298 residues: Tritrans,polycis-undecaprenyl-diphosphate synthase (geranylgeranyl-diphosphate specific) (298 aa).

Residue Asp35 is part of the active site. Asp35 contributes to the Mg(2+) binding site. Substrate-binding positions include 36-39 (GNRR), Arg48, His52, and 80-82 (STE). Asn83 functions as the Proton acceptor in the catalytic mechanism. Substrate-binding positions include Phe84, Arg86, Arg208, and 214–216 (RIS).

The protein belongs to the UPP synthase family. As to quaternary structure, homodimer. Requires Mg(2+) as cofactor.

It carries out the reaction geranylgeranyl diphosphate + 7 isopentenyl diphosphate = tri-trans,hepta-cis-undecaprenyl diphosphate + 7 diphosphate. Functionally, catalyzes the sequential condensation of isopentenyl diphosphate (IPP) with geranylgeranyl diphosphate (GGPP) to yield (2Z,6Z,10Z,14Z,18Z,22Z,26Z,30E,34E,38E)-undecaprenyl diphosphate (tritrans,heptacis-UPP). It is probably the precursor of glycosyl carrier lipids. The protein is Tritrans,polycis-undecaprenyl-diphosphate synthase (geranylgeranyl-diphosphate specific) of Methanosarcina mazei (strain ATCC BAA-159 / DSM 3647 / Goe1 / Go1 / JCM 11833 / OCM 88) (Methanosarcina frisia).